A 441-amino-acid chain; its full sequence is ACT domain-containing protein ACR8 (441 aa).

4 ACT domains span residues I34–V110, A115–K196, V248–G324, and R326–H405.

Expressed in roots, leaves, flowers and siliques.

Its function is as follows. May bind amino acids. This Arabidopsis thaliana (Mouse-ear cress) protein is ACT domain-containing protein ACR8.